The chain runs to 196 residues: Lipoprotein signal peptidase (196 aa).

3 helical membrane passes run 17–37, 73–93, and 96–116; these read SIIITLVIIDQLSKWWFIDNL, SNAIFLITNTLIVCYLYYLMI, and NTIGSFAGYSFVIGGAVGNLI. Active-site residues include Asp126 and Asp144. Residues 135-155 traverse the membrane as a helical segment; sequence YSFPVFNLADCFITIGVIILI.

The protein belongs to the peptidase A8 family.

It localises to the cell inner membrane. The enzyme catalyses Release of signal peptides from bacterial membrane prolipoproteins. Hydrolyzes -Xaa-Yaa-Zaa-|-(S,diacylglyceryl)Cys-, in which Xaa is hydrophobic (preferably Leu), and Yaa (Ala or Ser) and Zaa (Gly or Ala) have small, neutral side chains.. It functions in the pathway protein modification; lipoprotein biosynthesis (signal peptide cleavage). This protein specifically catalyzes the removal of signal peptides from prolipoproteins. In Rickettsia akari (strain Hartford), this protein is Lipoprotein signal peptidase.